The following is a 590-amino-acid chain: Protein O-linked-mannose beta-1,4-N-acetylglucosaminyltransferase 2 (590 aa).

Residues 1–4 (MSVG) lie on the Cytoplasmic side of the membrane. The chain crosses the membrane as a helical; Signal-anchor for type II membrane protein span at residues 5-25 (TLLNGLLVSIVAALLWKYSKL). At 26-590 (SEHAALLEEE…PFADVLMCRT (565 aa)) the chain is on the lumenal side. Residues Asn98, Asn275, and Asn553 are each glycosylated (N-linked (GlcNAc...) asparagine). The region spanning 494 to 590 (RVRDPQCQTS…PFADVLMCRT (97 aa)) is the Fibronectin type-III domain.

Belongs to the glycosyltransferase 61 family.

The protein localises to the endoplasmic reticulum membrane. The catalysed reaction is 3-O-(alpha-D-mannosyl)-L-threonyl-[protein] + UDP-N-acetyl-alpha-D-glucosamine = 3-O-(N-acetyl-beta-D-glucosaminyl-(1-&gt;4)-alpha-D-mannosyl)-L-threonyl-[protein] + UDP + H(+). The protein operates within protein modification; protein glycosylation. In terms of biological role, O-linked mannose beta-1,4-N-acetylglucosaminyltransferase that transfers UDP-N-acetyl-D-glucosamine to the 4-position of the mannose to generate N-acetyl-D-glucosamine-beta-1,4-O-D-mannosylprotein. Involved in the biosynthesis of the phosphorylated O-mannosyl trisaccharide (N-acetylgalactosamine-beta-3-N-acetylglucosamine-beta-4-(phosphate-6-)mannose), a carbohydrate structure present in alpha-dystroglycan (DAG1), which is required for binding laminin G-like domain-containing extracellular proteins with high affinity. The sequence is that of Protein O-linked-mannose beta-1,4-N-acetylglucosaminyltransferase 2 (pomgnt2) from Takifugu rubripes (Japanese pufferfish).